We begin with the raw amino-acid sequence, 120 residues long: NAD(P)H-quinone oxidoreductase subunit 3, chloroplastic (120 aa).

Transmembrane regions (helical) follow at residues 9 to 29, 64 to 84, and 88 to 108; these read IFWA…LISG, MFAL…PWAM, and VLGV…IVGS.

Belongs to the complex I subunit 3 family. In terms of assembly, NDH is composed of at least 16 different subunits, 5 of which are encoded in the nucleus.

It localises to the plastid. The protein localises to the chloroplast thylakoid membrane. It catalyses the reaction a plastoquinone + NADH + (n+1) H(+)(in) = a plastoquinol + NAD(+) + n H(+)(out). The enzyme catalyses a plastoquinone + NADPH + (n+1) H(+)(in) = a plastoquinol + NADP(+) + n H(+)(out). NDH shuttles electrons from NAD(P)H:plastoquinone, via FMN and iron-sulfur (Fe-S) centers, to quinones in the photosynthetic chain and possibly in a chloroplast respiratory chain. The immediate electron acceptor for the enzyme in this species is believed to be plastoquinone. Couples the redox reaction to proton translocation, and thus conserves the redox energy in a proton gradient. The chain is NAD(P)H-quinone oxidoreductase subunit 3, chloroplastic from Gossypium hirsutum (Upland cotton).